The chain runs to 1436 residues: Inositol hexakisphosphate and diphosphoinositol-pentakisphosphate kinase 1 (1436 aa).

Position 64 to 65 (64 to 65 (KK)) interacts with substrate. ATP-binding positions include Arg-145, Lys-198, His-205, Arg-224, 248–251 (EEFM), and 257–259 (DVK). Residue 224–225 (RK) participates in substrate binding. The substrate site is built by Lys-259 and Arg-273. Residues Ser-275, Asp-320, and 332–334 (DVN) contribute to the ATP site. Residue 337 to 340 (SFVK) coordinates substrate. Positions 382–453 (PTTSGTMMEL…VLDITRLLLA (72 aa)) are polyphosphoinositide-binding domain. The interval 915-998 (GSAPAGCGFR…TSSSRPGGYR (84 aa)) is disordered. Phosphoserine is present on residues Ser-939, Ser-982, Ser-1032, Ser-1068, Ser-1140, and Ser-1147. Disordered regions lie at residues 1131 to 1191 (NHQA…GFSD) and 1389 to 1436 (SELS…EAIS). Positions 1163–1181 (SSGPSSTVSSAGPSSPTTV) are enriched in low complexity. The span at 1405–1436 (LSEETELQAQEVSEEIDQESEVVDELPPEAIS) shows a compositional bias: acidic residues.

It belongs to the histidine acid phosphatase family. VIP1 subfamily.

The protein localises to the cytoplasm. Its subcellular location is the cytosol. It is found in the cell membrane. It carries out the reaction 1D-myo-inositol hexakisphosphate + ATP = 1-diphospho-1D-myo-inositol 2,3,4,5,6-pentakisphosphate + ADP. The enzyme catalyses 5-diphospho-1D-myo-inositol 1,2,3,4,6-pentakisphosphate + ATP + H(+) = 1,5-bis(diphospho)-1D-myo-inositol 2,3,4,6-tetrakisphosphate + ADP. Functionally, bifunctional inositol kinase that acts in concert with the IP6K kinases IP6K1, IP6K2 and IP6K3 to synthesize the diphosphate group-containing inositol pyrophosphates diphosphoinositol pentakisphosphate, PP-InsP5, and bis-diphosphoinositol tetrakisphosphate, (PP)2-InsP4. PP-InsP5 and (PP)2-InsP4, also respectively called InsP7 and InsP8, regulate a variety of cellular processes, including apoptosis, vesicle trafficking, cytoskeletal dynamics, exocytosis, insulin signaling and neutrophil activation. Phosphorylates inositol hexakisphosphate (InsP6) at position 1 to produce PP-InsP5 which is in turn phosphorylated by IP6Ks to produce (PP)2-InsP4. Alternatively, phosphorylates PP-InsP5 at position 1, produced by IP6Ks from InsP6, to produce (PP)2-InsP4. Activated when cells are exposed to hyperosmotic stress. In Mus musculus (Mouse), this protein is Inositol hexakisphosphate and diphosphoinositol-pentakisphosphate kinase 1.